Reading from the N-terminus, the 347-residue chain is NADH-ubiquinone oxidoreductase chain 2 (347 aa).

The next 10 helical transmembrane spans lie at Pro-3–Ser-23, His-25–Met-45, Tyr-59–Leu-79, Ile-96–Pro-116, Gly-148–Leu-170, Ile-178–Pro-198, Met-200–Met-220, Ile-247–Ile-267, Ile-276–Leu-296, and Leu-326–Leu-346.

This sequence belongs to the complex I subunit 2 family. As to quaternary structure, core subunit of respiratory chain NADH dehydrogenase (Complex I) which is composed of 45 different subunits. Interacts with TMEM242.

It is found in the mitochondrion inner membrane. It carries out the reaction a ubiquinone + NADH + 5 H(+)(in) = a ubiquinol + NAD(+) + 4 H(+)(out). Functionally, core subunit of the mitochondrial membrane respiratory chain NADH dehydrogenase (Complex I) which catalyzes electron transfer from NADH through the respiratory chain, using ubiquinone as an electron acceptor. Essential for the catalytic activity and assembly of complex I. The sequence is that of NADH-ubiquinone oxidoreductase chain 2 from Saccopteryx leptura (Lesser sac-winged bat).